The chain runs to 573 residues: Anti-Muellerian hormone type-2 receptor (573 aa).

An N-terminal signal peptide occupies residues 1 to 17 (MLGSLGLWALLPTAVEA). Topologically, residues 18–149 (PPNRRTCVFF…APGESIWMAL (132 aa)) are extracellular. Intrachain disulfides connect cysteine 55-cysteine 79 and cysteine 92-cysteine 109. The N-linked (GlcNAc...) asparagine glycan is linked to asparagine 66. N-linked (GlcNAc...) asparagine glycosylation is present at asparagine 119. A helical transmembrane segment spans residues 150–170 (VLLGLFLLLLLLLGSIILALL). The Cytoplasmic segment spans residues 171–573 (QRKNYRVRGE…PQPACTLSPV (403 aa)). The Protein kinase domain maps to 203-518 (LCFSQVIREG…AHPQESHPFP (316 aa)). ATP is bound by residues 209–217 (IREGGHAVV) and lysine 230. The Proton acceptor role is filled by aspartate 333.

This sequence belongs to the protein kinase superfamily. TKL Ser/Thr protein kinase family. TGFB receptor subfamily. In terms of assembly, interacts with type I receptor ACVR1. Requires Mg(2+) as cofactor. It depends on Mn(2+) as a cofactor.

It localises to the membrane. The enzyme catalyses L-threonyl-[receptor-protein] + ATP = O-phospho-L-threonyl-[receptor-protein] + ADP + H(+). It carries out the reaction L-seryl-[receptor-protein] + ATP = O-phospho-L-seryl-[receptor-protein] + ADP + H(+). Functionally, on ligand binding, forms a receptor complex consisting of two type II and two type I transmembrane serine/threonine kinases. Type II receptors phosphorylate and activate type I receptors which autophosphorylate, then bind and activate SMAD transcriptional regulators. Receptor for anti-Muellerian hormone. The chain is Anti-Muellerian hormone type-2 receptor (AMHR2) from Homo sapiens (Human).